A 277-amino-acid polypeptide reads, in one-letter code: Energy-coupling factor transporter ATP-binding protein EcfA1 (277 aa).

In terms of domain architecture, ABC transporter spans isoleucine 4–lysine 238. Glycine 38–serine 45 contacts ATP.

This sequence belongs to the ABC transporter superfamily. Energy-coupling factor EcfA family. As to quaternary structure, forms a stable energy-coupling factor (ECF) transporter complex composed of 2 membrane-embedded substrate-binding proteins (S component), 2 ATP-binding proteins (A component) and 2 transmembrane proteins (T component).

It is found in the cell membrane. Its function is as follows. ATP-binding (A) component of a common energy-coupling factor (ECF) ABC-transporter complex. Unlike classic ABC transporters this ECF transporter provides the energy necessary to transport a number of different substrates. In Oenococcus oeni (strain ATCC BAA-331 / PSU-1), this protein is Energy-coupling factor transporter ATP-binding protein EcfA1.